Reading from the N-terminus, the 32-residue chain is Photosystem II reaction center protein T (32 aa).

Residues A3–F23 traverse the membrane as a helical segment.

It belongs to the PsbT family. In terms of assembly, PSII is composed of 1 copy each of membrane proteins PsbA, PsbB, PsbC, PsbD, PsbE, PsbF, PsbH, PsbI, PsbJ, PsbK, PsbL, PsbM, PsbT, PsbX, PsbY, PsbZ, Psb30/Ycf12, at least 3 peripheral proteins of the oxygen-evolving complex and a large number of cofactors. It forms dimeric complexes.

The protein localises to the plastid. Its subcellular location is the chloroplast thylakoid membrane. In terms of biological role, found at the monomer-monomer interface of the photosystem II (PS II) dimer, plays a role in assembly and dimerization of PSII. PSII is a light-driven water plastoquinone oxidoreductase, using light energy to abstract electrons from H(2)O, generating a proton gradient subsequently used for ATP formation. The chain is Photosystem II reaction center protein T from Phaeodactylum tricornutum (strain CCAP 1055/1).